We begin with the raw amino-acid sequence, 348 residues long: Probable dual-specificity RNA methyltransferase RlmN (348 aa).

Catalysis depends on Glu-93, which acts as the Proton acceptor. The Radical SAM core domain occupies 99–333 (TEKRLTACLS…VSLRKSRGSD (235 aa)). An intrachain disulfide couples Cys-106 to Cys-338. Cys-113, Cys-117, and Cys-120 together coordinate [4Fe-4S] cluster. Residues 160–161 (GE), Ser-190, 219–221 (SLH), and Asn-295 contribute to the S-adenosyl-L-methionine site. The active-site S-methylcysteine intermediate is Cys-338.

Belongs to the radical SAM superfamily. RlmN family. The cofactor is [4Fe-4S] cluster.

Its subcellular location is the cytoplasm. It carries out the reaction adenosine(2503) in 23S rRNA + 2 reduced [2Fe-2S]-[ferredoxin] + 2 S-adenosyl-L-methionine = 2-methyladenosine(2503) in 23S rRNA + 5'-deoxyadenosine + L-methionine + 2 oxidized [2Fe-2S]-[ferredoxin] + S-adenosyl-L-homocysteine. The catalysed reaction is adenosine(37) in tRNA + 2 reduced [2Fe-2S]-[ferredoxin] + 2 S-adenosyl-L-methionine = 2-methyladenosine(37) in tRNA + 5'-deoxyadenosine + L-methionine + 2 oxidized [2Fe-2S]-[ferredoxin] + S-adenosyl-L-homocysteine. Its function is as follows. Specifically methylates position 2 of adenine 2503 in 23S rRNA and position 2 of adenine 37 in tRNAs. The protein is Probable dual-specificity RNA methyltransferase RlmN of Prochlorococcus marinus (strain MIT 9515).